Here is a 266-residue protein sequence, read N- to C-terminus: 3-methyl-2-oxobutanoate hydroxymethyltransferase 2 (266 aa).

Mg(2+) is bound by residues Asp-45 and Asp-84. 3-methyl-2-oxobutanoate contacts are provided by residues 45-46, Asp-84, and Lys-112; that span reads DS. A Mg(2+)-binding site is contributed by Glu-114. Glu-181 serves as the catalytic Proton acceptor.

It belongs to the PanB family. In terms of assembly, homodecamer; pentamer of dimers. Requires Mg(2+) as cofactor.

The protein resides in the cytoplasm. The catalysed reaction is 3-methyl-2-oxobutanoate + (6R)-5,10-methylene-5,6,7,8-tetrahydrofolate + H2O = 2-dehydropantoate + (6S)-5,6,7,8-tetrahydrofolate. It functions in the pathway cofactor biosynthesis; (R)-pantothenate biosynthesis; (R)-pantoate from 3-methyl-2-oxobutanoate: step 1/2. Catalyzes the reversible reaction in which hydroxymethyl group from 5,10-methylenetetrahydrofolate is transferred onto alpha-ketoisovalerate to form ketopantoate. In Pseudomonas fluorescens (strain ATCC BAA-477 / NRRL B-23932 / Pf-5), this protein is 3-methyl-2-oxobutanoate hydroxymethyltransferase 2.